Reading from the N-terminus, the 498-residue chain is Phenylalanine--tRNA ligase alpha subunit (498 aa).

L-phenylalanine is bound by residues T328, 372 to 374 (QVE), and Y412. Mg(2+) is bound at residue E414. F438 contributes to the L-phenylalanine binding site.

It belongs to the class-II aminoacyl-tRNA synthetase family. Phe-tRNA synthetase alpha subunit type 2 subfamily. Tetramer of two alpha and two beta subunits. Mg(2+) is required as a cofactor.

It localises to the cytoplasm. The catalysed reaction is tRNA(Phe) + L-phenylalanine + ATP = L-phenylalanyl-tRNA(Phe) + AMP + diphosphate + H(+). The protein is Phenylalanine--tRNA ligase alpha subunit of Drosophila melanogaster (Fruit fly).